The primary structure comprises 367 residues: 3-isopropylmalate dehydrogenase (367 aa).

75-88 contacts NAD(+); sequence GPKWDGIERSKRPE. The substrate site is built by arginine 95, arginine 105, arginine 133, and aspartate 230. Mg(2+)-binding residues include aspartate 230, aspartate 254, and aspartate 258. 288–300 is an NAD(+) binding site; the sequence is GSAPDIAGQDIAN.

Belongs to the isocitrate and isopropylmalate dehydrogenases family. LeuB type 1 subfamily. As to quaternary structure, homodimer. Requires Mg(2+) as cofactor. It depends on Mn(2+) as a cofactor.

It is found in the cytoplasm. The enzyme catalyses (2R,3S)-3-isopropylmalate + NAD(+) = 4-methyl-2-oxopentanoate + CO2 + NADH. It participates in amino-acid biosynthesis; L-leucine biosynthesis; L-leucine from 3-methyl-2-oxobutanoate: step 3/4. Functionally, catalyzes the oxidation of 3-carboxy-2-hydroxy-4-methylpentanoate (3-isopropylmalate) to 3-carboxy-4-methyl-2-oxopentanoate. The product decarboxylates to 4-methyl-2 oxopentanoate. The chain is 3-isopropylmalate dehydrogenase from Psychrobacter cryohalolentis (strain ATCC BAA-1226 / DSM 17306 / VKM B-2378 / K5).